The primary structure comprises 134 residues: Large ribosomal subunit protein bL12 (134 aa).

It belongs to the bacterial ribosomal protein bL12 family. In terms of assembly, homodimer. Part of the ribosomal stalk of the 50S ribosomal subunit. Forms a multimeric L10(L12)X complex, where L10 forms an elongated spine to which 2 to 4 L12 dimers bind in a sequential fashion. Binds GTP-bound translation factors.

In terms of biological role, forms part of the ribosomal stalk which helps the ribosome interact with GTP-bound translation factors. Is thus essential for accurate translation. The chain is Large ribosomal subunit protein bL12 from Anaplasma phagocytophilum (strain HZ).